A 334-amino-acid chain; its full sequence is Ornithine carbamoyltransferase (334 aa).

Carbamoyl phosphate is bound by residues 56–59 (STRT), Q83, R107, and 134–137 (HPTQ). L-ornithine-binding positions include N168, D232, and 236–237 (SM). Carbamoyl phosphate contacts are provided by residues 274 to 275 (CL) and R320.

Belongs to the aspartate/ornithine carbamoyltransferase superfamily. OTCase family.

Its subcellular location is the cytoplasm. The catalysed reaction is carbamoyl phosphate + L-ornithine = L-citrulline + phosphate + H(+). It functions in the pathway amino-acid biosynthesis; L-arginine biosynthesis; L-arginine from L-ornithine and carbamoyl phosphate: step 1/3. Functionally, reversibly catalyzes the transfer of the carbamoyl group from carbamoyl phosphate (CP) to the N(epsilon) atom of ornithine (ORN) to produce L-citrulline. In Escherichia coli O45:K1 (strain S88 / ExPEC), this protein is Ornithine carbamoyltransferase.